The primary structure comprises 414 residues: Gamma-glutamyl phosphate reductase (414 aa).

This sequence belongs to the gamma-glutamyl phosphate reductase family.

Its subcellular location is the cytoplasm. It carries out the reaction L-glutamate 5-semialdehyde + phosphate + NADP(+) = L-glutamyl 5-phosphate + NADPH + H(+). Its pathway is amino-acid biosynthesis; L-proline biosynthesis; L-glutamate 5-semialdehyde from L-glutamate: step 2/2. In terms of biological role, catalyzes the NADPH-dependent reduction of L-glutamate 5-phosphate into L-glutamate 5-semialdehyde and phosphate. The product spontaneously undergoes cyclization to form 1-pyrroline-5-carboxylate. The sequence is that of Gamma-glutamyl phosphate reductase from Geobacillus kaustophilus (strain HTA426).